We begin with the raw amino-acid sequence, 470 residues long: Cysteine--tRNA ligase (470 aa).

Cys29 contributes to the Zn(2+) binding site. Positions 31–41 (PTVYNYAHIGN) match the 'HIGH' region motif. Zn(2+)-binding residues include Cys211, His236, and Glu240. Positions 273–277 (KMSKS) match the 'KMSKS' region motif. Residue Lys276 participates in ATP binding.

The protein belongs to the class-I aminoacyl-tRNA synthetase family. Monomer. It depends on Zn(2+) as a cofactor.

Its subcellular location is the cytoplasm. It catalyses the reaction tRNA(Cys) + L-cysteine + ATP = L-cysteinyl-tRNA(Cys) + AMP + diphosphate. The sequence is that of Cysteine--tRNA ligase from Phenylobacterium zucineum (strain HLK1).